Reading from the N-terminus, the 357-residue chain is MDGLNDLRAGWLDRIGGATDEATLEEFRVAALGKKGEISLKMRELGKMTPEERQVAGPALNALKDEVNAAIAAKKAGLADAALDERLKAEWLDVTLPARPKRVGSIHPVSQVTEEVTAIFADMGFSVAEGPQIETDFYNFDALNIPGHHPARAEMDTFYTHRAEGDNRPPHVLRTHTSPVQIRHMEKHGAPCRIIAPGRVYRADYDQTHTPMFHQVEGLVLGRDVSMANLKWVLEEFYSAFFGVQVKTRFRASHFPFVEPGAEVDIQCSFEGGTVKVGEGDDWLEILGSGMVHPKVLEAGGIDPQEFQGFAFGMGIDRIAMLKYGIPDLRDFFASDLRWLRHYGFASLEMPSVHAGD.

Mg(2+) is bound at residue glutamate 259.

It belongs to the class-II aminoacyl-tRNA synthetase family. Phe-tRNA synthetase alpha subunit type 1 subfamily. As to quaternary structure, tetramer of two alpha and two beta subunits. Mg(2+) serves as cofactor.

Its subcellular location is the cytoplasm. The enzyme catalyses tRNA(Phe) + L-phenylalanine + ATP = L-phenylalanyl-tRNA(Phe) + AMP + diphosphate + H(+). The chain is Phenylalanine--tRNA ligase alpha subunit from Jannaschia sp. (strain CCS1).